The following is a 144-amino-acid chain: AP-4 complex subunit sigma-1 (144 aa).

It belongs to the adaptor complexes small subunit family. Adaptor protein complex 4 (AP-4) is a heterotetramer composed of two large adaptins (epsilon-type subunit AP4E1 and beta-type subunit AP4B1), a medium adaptin (mu-type subunit AP4M1) and a small adaptin (sigma-type AP4S1).

The protein localises to the golgi apparatus. It localises to the trans-Golgi network membrane. In terms of biological role, component of the adaptor protein complex 4 (AP-4). Adaptor protein complexes are vesicle coat components involved both in vesicle formation and cargo selection. They control the vesicular transport of proteins in different trafficking pathways. AP-4 forms a non clathrin-associated coat on vesicles departing the trans-Golgi network (TGN) and may be involved in the targeting of proteins from the trans-Golgi network (TGN) to the endosomal-lysosomal system. It is also involved in protein sorting to the basolateral membrane in epithelial cells and the proper asymmetric localization of somatodendritic proteins in neurons. AP-4 is involved in the recognition and binding of tyrosine-based sorting signals found in the cytoplasmic part of cargos, but may also recognize other types of sorting signal. The polypeptide is AP-4 complex subunit sigma-1 (Mus musculus (Mouse)).